The chain runs to 60 residues: Probable UDP-arabinopyranose mutase 1 (60 aa).

The protein belongs to the RGP family. Homopentamer or homohexamer. It depends on Mn(2+) as a cofactor. The cofactor is Mg(2+).

It is found in the secreted. The protein resides in the cell wall. Its subcellular location is the cell junction. It localises to the plasmodesma. The protein localises to the golgi apparatus. The catalysed reaction is UDP-beta-L-arabinofuranose = UDP-beta-L-arabinopyranose. Functionally, probable UDP-L-arabinose mutase involved in the biosynthesis of cell wall non-cellulosic polysaccharides. The chain is Probable UDP-arabinopyranose mutase 1 from Phoenix dactylifera (Date palm).